The sequence spans 187 residues: Core-binding factor subunit beta (187 aa).

Ser-10 is subject to Phosphoserine; by CK2. The interval 139–187 (AQQAFEEARRRTREFEDRDRSHREEMEARRQQDPSPGSNLGGGDDLKLR) is disordered. Positions 144–170 (EEARRRTREFEDRDRSHREEMEARRQQ) are enriched in basic and acidic residues. Position 159 is a phosphoserine; by PKC (Ser-159).

The protein belongs to the CBF-beta family. Heterodimer with RUNX1, RUNX2 and RUNX3. Interacts with COPRS. Found in a complex with PRMT5 and RUNX1. Expressed in all tissues tested. Highest level in thymus, but also abundantly expressed in muscle, lung and brain.

The protein localises to the nucleus. Functionally, forms the heterodimeric complex core-binding factor (CBF) with RUNX family proteins (RUNX1, RUNX2, and RUNX3). RUNX members modulate the transcription of their target genes through recognizing the core consensus binding sequence 5'-TGTGGT-3', or very rarely, 5'-TGCGGT-3', within their regulatory regions via their runt domain, while CBFB is a non-DNA-binding regulatory subunit that allosterically enhances the sequence-specific DNA-binding capacity of RUNX. The heterodimers bind to the core site of a number of enhancers and promoters, including murine leukemia virus, polyomavirus enhancer, T-cell receptor enhancers, LCK, IL3 and GM-CSF promoters. CBF complexes repress ZBTB7B transcription factor during cytotoxic (CD8+) T cell development. They bind to RUNX-binding sequence within the ZBTB7B locus acting as transcriptional silencer and allowing for cytotoxic T cell differentiation. This Mus musculus (Mouse) protein is Core-binding factor subunit beta (Cbfb).